Consider the following 692-residue polypeptide: DNA ligase (692 aa).

The span at 1–14 shows a compositional bias: polar residues; that stretch reads MQPDLFSTASQADA. The disordered stretch occupies residues 1–27; sequence MQPDLFSTASQADANATPEEPDASNPA. NAD(+) is bound by residues 54–58, 103–104, and Glu-134; these read DAEYD and SL. The active-site N6-AMP-lysine intermediate is the Lys-136. Positions 157, 194, 311, and 335 each coordinate NAD(+). Cys-429, Cys-432, Cys-447, and Cys-454 together coordinate Zn(2+). Positions 612–692 constitute a BRCT domain; sequence NKPKPFAGKT…ALLQLLDTHE (81 aa).

This sequence belongs to the NAD-dependent DNA ligase family. LigA subfamily. Requires Mg(2+) as cofactor. The cofactor is Mn(2+).

The catalysed reaction is NAD(+) + (deoxyribonucleotide)n-3'-hydroxyl + 5'-phospho-(deoxyribonucleotide)m = (deoxyribonucleotide)n+m + AMP + beta-nicotinamide D-nucleotide.. Functionally, DNA ligase that catalyzes the formation of phosphodiester linkages between 5'-phosphoryl and 3'-hydroxyl groups in double-stranded DNA using NAD as a coenzyme and as the energy source for the reaction. It is essential for DNA replication and repair of damaged DNA. This is DNA ligase from Janthinobacterium sp. (strain Marseille) (Minibacterium massiliensis).